A 269-amino-acid chain; its full sequence is GTP cyclohydrolase FolE2 (269 aa).

This sequence belongs to the GTP cyclohydrolase IV family.

The enzyme catalyses GTP + H2O = 7,8-dihydroneopterin 3'-triphosphate + formate + H(+). It functions in the pathway cofactor biosynthesis; 7,8-dihydroneopterin triphosphate biosynthesis; 7,8-dihydroneopterin triphosphate from GTP: step 1/1. Converts GTP to 7,8-dihydroneopterin triphosphate. The polypeptide is GTP cyclohydrolase FolE2 (Burkholderia ambifaria (strain MC40-6)).